We begin with the raw amino-acid sequence, 103 residues long: DNA-binding protein TRF1 (103 aa).

Its function is as follows. DNA-binding protein that recognizes the inverted terminal repeats of the pGKl linear DNA plasmids. This Kluyveromyces lactis (strain ATCC 8585 / CBS 2359 / DSM 70799 / NBRC 1267 / NRRL Y-1140 / WM37) (Yeast) protein is DNA-binding protein TRF1 (TRF1).